The sequence spans 90 residues: Small ribosomal subunit protein uS15c (90 aa).

The protein belongs to the universal ribosomal protein uS15 family. As to quaternary structure, part of the 30S ribosomal subunit.

It localises to the plastid. The protein resides in the chloroplast. The sequence is that of Small ribosomal subunit protein uS15c (rps15) from Nandina domestica (Heavenly bamboo).